We begin with the raw amino-acid sequence, 366 residues long: Cobalt-precorrin-5B C(1)-methyltransferase (366 aa).

This sequence belongs to the CbiD family.

The catalysed reaction is Co-precorrin-5B + S-adenosyl-L-methionine = Co-precorrin-6A + S-adenosyl-L-homocysteine. It participates in cofactor biosynthesis; adenosylcobalamin biosynthesis; cob(II)yrinate a,c-diamide from sirohydrochlorin (anaerobic route): step 6/10. Catalyzes the methylation of C-1 in cobalt-precorrin-5B to form cobalt-precorrin-6A. The sequence is that of Cobalt-precorrin-5B C(1)-methyltransferase from Thermoanaerobacter sp. (strain X514).